The following is a 163-amino-acid chain: Extracellular giant hemoglobin major globin subunit B2 (163 aa).

An N-terminal signal peptide occupies residues 1–16 (MIALFVLMGLMAAASA). The region spanning 19–163 (CCSSEDRANV…RIANGISAGL (145 aa)) is the Globin domain. Cysteines 20 and 151 form a disulfide. Position 83 (Cys-83) interacts with hydrogen sulfide. Residue His-114 participates in heme b binding.

This sequence belongs to the globin family. The 400 kDa hemoglobin consists of a spherical 24-mer arranged as a double layer of dome-shaped dodecamers. Each dodecamer is composed of the 3-fold trimer of the tetramer A1-A2-B1-B2 having one intra-tetramer (A1-B2) disulfide bond and one inter-tetramer (B1-B2) disulfide bond per tetramer.

It localises to the secreted. Its function is as follows. The extracellular giant hemoglobin is able to bind and transport oxygen and hydrosulfide simultaneously and reversibly at two different sites. The sequence is that of Extracellular giant hemoglobin major globin subunit B2 (ghbB2) from Oligobrachia mashikoi (Beard worm).